A 599-amino-acid chain; its full sequence is Pentatricopeptide repeat-containing protein At3g62470, mitochondrial (599 aa).

Residues 1–99 (MAAAPWLHLS…RGFSSGSSNV (99 aa)) constitute a mitochondrion transit peptide. 10 PPR repeats span residues 194–228 (DSRTYNSMMSILAKTRQFETMVSVLEEMGTKGLLT), 230–262 (ETFTIAMKAFAAAKERKKAVGIFELMKKYKFKI), 263–293 (GVETINCLLDSLGRAKLGKEAQVLFDKLKER), 297–331 (NMMTYTVLLNGWCRVRNLIEAARIWNDMIDQGLKP), 332–366 (DIVAHNVMLEGLLRSRKKSDAIKLFHVMKSKGPCP), 367–401 (NVRSYTIMIRDFCKQSSMETAIEYFDDMVDSGLQP), 402–436 (DAAVYTCLITGFGTQKKLDTVYELLKEMQEKGHPP), 437–471 (DGKTYNALIKLMANQKMPEHATRIYNKMIQNEIEP), 472–506 (SIHTFNMIMKSYFMARNYEMGRAVWEEMIKKGICP), and 507–541 (DDNSYTVLIRGLIGEGKSREACRYLEEMLDKGMKT).

It belongs to the PPR family. P subfamily.

It is found in the mitochondrion. In Arabidopsis thaliana (Mouse-ear cress), this protein is Pentatricopeptide repeat-containing protein At3g62470, mitochondrial.